The chain runs to 89 residues: Small ribosomal subunit protein bS18 (89 aa).

Positions 1-15 are enriched in low complexity; sequence MTTANTNETAAAAAA. A disordered region spans residues 1–22; it reads MTTANTNETAAAAAAKNRRNKK.

The protein belongs to the bacterial ribosomal protein bS18 family. Part of the 30S ribosomal subunit. Forms a tight heterodimer with protein bS6.

In terms of biological role, binds as a heterodimer with protein bS6 to the central domain of the 16S rRNA, where it helps stabilize the platform of the 30S subunit. In Caldanaerobacter subterraneus subsp. tengcongensis (strain DSM 15242 / JCM 11007 / NBRC 100824 / MB4) (Thermoanaerobacter tengcongensis), this protein is Small ribosomal subunit protein bS18.